We begin with the raw amino-acid sequence, 205 residues long: Thymidylate kinase (205 aa).

ATP is bound at residue 10–17 (GIDGAGKS).

It belongs to the thymidylate kinase family.

The catalysed reaction is dTMP + ATP = dTDP + ADP. Functionally, phosphorylation of dTMP to form dTDP in both de novo and salvage pathways of dTTP synthesis. This is Thymidylate kinase from Ralstonia nicotianae (strain ATCC BAA-1114 / GMI1000) (Ralstonia solanacearum).